We begin with the raw amino-acid sequence, 181 residues long: UPF0340 protein OB2986 (181 aa).

The protein belongs to the UPF0340 family.

This is UPF0340 protein OB2986 from Oceanobacillus iheyensis (strain DSM 14371 / CIP 107618 / JCM 11309 / KCTC 3954 / HTE831).